A 64-amino-acid chain; its full sequence is Beta-defensin 1 (64 aa).

Residues 1 to 20 (MRLHHLLLVLFFLVLSAGSG) form the signal peptide. Positions 21-26 (FTQGIR) are excised as a propeptide. Disulfide bonds link Cys-31–Cys-60, Cys-38–Cys-53, and Cys-43–Cys-61.

This sequence belongs to the beta-defensin family. Monomer. Homodimer.

The protein localises to the secreted. The protein resides in the membrane. Its function is as follows. Has bactericidal activity. May act as a ligand for C-C chemokine receptor CCR6. Positively regulates the sperm motility and bactericidal activity in a CCR6-dependent manner. Binds to CCR6 and triggers Ca2+ mobilization in the sperm which is important for its motility. This chain is Beta-defensin 1 (DEFB1), found in Capra hircus (Goat).